Reading from the N-terminus, the 328-residue chain is GMP reductase (328 aa).

The active-site Thioimidate intermediate is Cys-176. 205–228 (IIADGGIRTHGDIAKSIRFGASMI) is an NADP(+) binding site.

This sequence belongs to the IMPDH/GMPR family. GuaC type 2 subfamily.

It catalyses the reaction IMP + NH4(+) + NADP(+) = GMP + NADPH + 2 H(+). Catalyzes the irreversible NADPH-dependent deamination of GMP to IMP. It functions in the conversion of nucleobase, nucleoside and nucleotide derivatives of G to A nucleotides, and in maintaining the intracellular balance of A and G nucleotides. The protein is GMP reductase of Streptococcus pneumoniae (strain P1031).